Consider the following 410-residue polypeptide: Peptidase T (410 aa).

His79 serves as a coordination point for Zn(2+). Residue Asp81 is part of the active site. Zn(2+) is bound at residue Asp142. Residue Glu176 is the Proton acceptor of the active site. Zn(2+)-binding residues include Glu177, Asp199, and His381.

The protein belongs to the peptidase M20B family. The cofactor is Zn(2+).

Its subcellular location is the cytoplasm. The catalysed reaction is Release of the N-terminal residue from a tripeptide.. Functionally, cleaves the N-terminal amino acid of tripeptides. This is Peptidase T from Bacillus velezensis (strain DSM 23117 / BGSC 10A6 / LMG 26770 / FZB42) (Bacillus amyloliquefaciens subsp. plantarum).